The chain runs to 582 residues: Spermatogenesis-associated protein 7 homolog (582 aa).

2 disordered regions span residues L167 to R192 and R251 to I289. Composition is skewed to polar residues over residues S169–R181 and E262–L274.

Found in a complex with CFAP410, NEK1 and SPATA7. Interacts with NEK1. Interacts with RPGRIP1. Interacts with RPGR. Interacts with NPHP4. Interacts with NPHP1. Interacts with AHI1. In terms of tissue distribution, expressed in the retina (at protein level). Expressed in the choroid region and retinal pigment endothelium, within the photoreceptor layer (at protein level).

It localises to the cytoplasm. Its subcellular location is the cytoskeleton. The protein localises to the cilium axoneme. The protein resides in the cilium basal body. It is found in the cell projection. It localises to the cilium. Its subcellular location is the photoreceptor outer segment. Its function is as follows. Involved in the maintenance of both rod and cone photoreceptor cells. Required for photoreceptor-specific localization of proximal connecting cilium (CC) proteins RPGR, AHI1, NPHP1, NPHP4, and RPGRIP1 at the distal CC, a photoreceptor-specific extension of the primary cilium transition zone. Maintenance of protein localization at the photoreceptor-specific distal CC is essential for normal microtubule stability and to prevent photoreceptor degeneration. This is Spermatogenesis-associated protein 7 homolog (Spata7) from Mus musculus (Mouse).